Here is a 152-residue protein sequence, read N- to C-terminus: SsrA-binding protein (152 aa).

This sequence belongs to the SmpB family.

It localises to the cytoplasm. Required for rescue of stalled ribosomes mediated by trans-translation. Binds to transfer-messenger RNA (tmRNA), required for stable association of tmRNA with ribosomes. tmRNA and SmpB together mimic tRNA shape, replacing the anticodon stem-loop with SmpB. tmRNA is encoded by the ssrA gene; the 2 termini fold to resemble tRNA(Ala) and it encodes a 'tag peptide', a short internal open reading frame. During trans-translation Ala-aminoacylated tmRNA acts like a tRNA, entering the A-site of stalled ribosomes, displacing the stalled mRNA. The ribosome then switches to translate the ORF on the tmRNA; the nascent peptide is terminated with the 'tag peptide' encoded by the tmRNA and targeted for degradation. The ribosome is freed to recommence translation, which seems to be the essential function of trans-translation. The protein is SsrA-binding protein of Rickettsia felis (strain ATCC VR-1525 / URRWXCal2) (Rickettsia azadi).